The sequence spans 184 residues: dCTP deaminase (184 aa).

Residue 107 to 112 (KSTIAR) coordinates dCTP. Residue glutamate 133 is the Proton donor/acceptor of the active site. Residues glutamine 152, tyrosine 166, and glutamine 176 each contribute to the dCTP site.

This sequence belongs to the dCTP deaminase family. Homotrimer.

The enzyme catalyses dCTP + H2O + H(+) = dUTP + NH4(+). The protein operates within pyrimidine metabolism; dUMP biosynthesis; dUMP from dCTP (dUTP route): step 1/2. Catalyzes the deamination of dCTP to dUTP. The protein is dCTP deaminase of Roseiflexus castenholzii (strain DSM 13941 / HLO8).